The primary structure comprises 239 residues: Phosphoribosylaminoimidazole-succinocarboxamide synthase (239 aa).

It belongs to the SAICAR synthetase family.

It catalyses the reaction 5-amino-1-(5-phospho-D-ribosyl)imidazole-4-carboxylate + L-aspartate + ATP = (2S)-2-[5-amino-1-(5-phospho-beta-D-ribosyl)imidazole-4-carboxamido]succinate + ADP + phosphate + 2 H(+). The protein operates within purine metabolism; IMP biosynthesis via de novo pathway; 5-amino-1-(5-phospho-D-ribosyl)imidazole-4-carboxamide from 5-amino-1-(5-phospho-D-ribosyl)imidazole-4-carboxylate: step 1/2. This chain is Phosphoribosylaminoimidazole-succinocarboxamide synthase, found in Brevibacillus brevis (strain 47 / JCM 6285 / NBRC 100599).